The sequence spans 622 residues: Membrane protein insertase YidC (622 aa).

Residues 8–28 form a helical membrane-spanning segment; sequence LFLALILSMGIWMGVNYFFFP. Residues 33 to 61 are compositionally biased toward basic and acidic residues; sequence KTSETKEVKVDKPSDDKQDQIQKEKKESR. Residues 33–70 form a disordered region; sequence KTSETKEVKVDKPSDDKQDQIQKEKKESRTTIPSKGTK. A run of 4 helical transmembrane segments spans residues 413 to 433, 484 to 504, 532 to 552, and 571 to 591; these read FTIP…KLVF, VGGC…YTAF, AIPY…LMVG, and MLMY…PSGV.

The protein belongs to the OXA1/ALB3/YidC family. Type 1 subfamily. Interacts with the Sec translocase complex via SecD. Specifically interacts with transmembrane segments of nascent integral membrane proteins during membrane integration.

Its subcellular location is the cell inner membrane. Functionally, required for the insertion and/or proper folding and/or complex formation of integral membrane proteins into the membrane. Involved in integration of membrane proteins that insert both dependently and independently of the Sec translocase complex, as well as at least some lipoproteins. Aids folding of multispanning membrane proteins. This chain is Membrane protein insertase YidC, found in Leptospira borgpetersenii serovar Hardjo-bovis (strain JB197).